A 273-amino-acid polypeptide reads, in one-letter code: Putative phosphoenolpyruvate synthase regulatory protein (273 aa).

153–160 (GVSRCGKT) provides a ligand contact to ADP.

It belongs to the pyruvate, phosphate/water dikinase regulatory protein family. PSRP subfamily.

It carries out the reaction [pyruvate, water dikinase] + ADP = [pyruvate, water dikinase]-phosphate + AMP + H(+). It catalyses the reaction [pyruvate, water dikinase]-phosphate + phosphate + H(+) = [pyruvate, water dikinase] + diphosphate. Its function is as follows. Bifunctional serine/threonine kinase and phosphorylase involved in the regulation of the phosphoenolpyruvate synthase (PEPS) by catalyzing its phosphorylation/dephosphorylation. This Yersinia enterocolitica serotype O:8 / biotype 1B (strain NCTC 13174 / 8081) protein is Putative phosphoenolpyruvate synthase regulatory protein.